The sequence spans 331 residues: Probable cytosolic iron-sulfur protein assembly protein Ciao1 (331 aa).

WD repeat units follow at residues glycine 12–lysine 51, glycine 57–glutamate 96, glycine 97–cysteine 136, alanine 142–aspartate 181, serine 188–glycine 227, glutamate 246–alanine 285, and alanine 297–glutamate 331.

Belongs to the WD repeat CIA1 family.

Its function is as follows. Essential component of the cytosolic iron-sulfur (Fe/S) protein assembly machinery. Required for the maturation of extramitochondrial Fe/S proteins. The polypeptide is Probable cytosolic iron-sulfur protein assembly protein Ciao1 (Drosophila virilis (Fruit fly)).